A 582-amino-acid chain; its full sequence is ATP-dependent lipid A-core flippase (582 aa).

Helical transmembrane passes span 26–46 (LIAASVALILNALVDSSLIYL), 68–88 (ILVMLFILLRGVSNYIASYCL), 140–160 (YVLVTIVREGAYLISLFAVMV), 164–184 (WQLSIVLFLLAPIIAFLISIV), and 252–272 (GLVQLIASLALSAVLYVATFP). The ABC transmembrane type-1 domain occupies 27 to 310 (IAASVALILN…LTSVNSQFQR (284 aa)). In terms of domain architecture, ABC transporter spans 342–578 (ITFDNVIFSY…GGAYKQLYSM (237 aa)). ATP is bound at residue 376–383 (GRSGSGKS).

This sequence belongs to the ABC transporter superfamily. Lipid exporter (TC 3.A.1.106) family. Homodimer.

The protein resides in the cell inner membrane. It carries out the reaction ATP + H2O + lipid A-core oligosaccharideSide 1 = ADP + phosphate + lipid A-core oligosaccharideSide 2.. Functionally, involved in lipopolysaccharide (LPS) biosynthesis. Translocates lipid A-core from the inner to the outer leaflet of the inner membrane. Transmembrane domains (TMD) form a pore in the inner membrane and the ATP-binding domain (NBD) is responsible for energy generation. This is ATP-dependent lipid A-core flippase from Haemophilus ducreyi (strain 35000HP / ATCC 700724).